Consider the following 214-residue polypeptide: MTTLADLRTNYSRASLDAADVNPNPFVQFDVWFKEALDAQLPEPNTMTLATVDESGRPSARIVLIKGADERGFVFFTNYESRKGRELAHNPNAALLFYWIELERQVRVEGRIEKTSEEESDRYFASRPLGSRIGAWASEQSAVIESRALLEAREKEIGARFGENPPRPPHWGGYRLVPSSIEFWQGRPSRLHDRLLYTRDAASASGWKITRLAP.

Substrate-binding positions include 8–11 and Lys-66; that span reads RTNY. FMN-binding positions include 61-66, 76-77, Arg-82, Lys-83, and Gln-105; these read RIVLIK and FT. Tyr-123, Arg-127, and Ser-131 together coordinate substrate. FMN-binding positions include 140-141 and Trp-184; that span reads QS. 190-192 serves as a coordination point for substrate; it reads RLH. Arg-194 is a binding site for FMN.

The protein belongs to the pyridoxamine 5'-phosphate oxidase family. As to quaternary structure, homodimer. Requires FMN as cofactor.

The catalysed reaction is pyridoxamine 5'-phosphate + O2 + H2O = pyridoxal 5'-phosphate + H2O2 + NH4(+). It catalyses the reaction pyridoxine 5'-phosphate + O2 = pyridoxal 5'-phosphate + H2O2. It functions in the pathway cofactor metabolism; pyridoxal 5'-phosphate salvage; pyridoxal 5'-phosphate from pyridoxamine 5'-phosphate: step 1/1. Its pathway is cofactor metabolism; pyridoxal 5'-phosphate salvage; pyridoxal 5'-phosphate from pyridoxine 5'-phosphate: step 1/1. Functionally, catalyzes the oxidation of either pyridoxine 5'-phosphate (PNP) or pyridoxamine 5'-phosphate (PMP) into pyridoxal 5'-phosphate (PLP). The protein is Pyridoxine/pyridoxamine 5'-phosphate oxidase of Burkholderia mallei (strain NCTC 10247).